We begin with the raw amino-acid sequence, 142 residues long: Large ribosomal subunit protein uL13 (142 aa).

It belongs to the universal ribosomal protein uL13 family. In terms of assembly, part of the 50S ribosomal subunit.

Its function is as follows. This protein is one of the early assembly proteins of the 50S ribosomal subunit, although it is not seen to bind rRNA by itself. It is important during the early stages of 50S assembly. This is Large ribosomal subunit protein uL13 from Photorhabdus laumondii subsp. laumondii (strain DSM 15139 / CIP 105565 / TT01) (Photorhabdus luminescens subsp. laumondii).